The primary structure comprises 192 residues: Peptidyl-tRNA hydrolase (192 aa).

Y18 is a tRNA binding site. Residue H23 is the Proton acceptor of the active site. TRNA is bound by residues F69, N71, and N117.

This sequence belongs to the PTH family. Monomer.

Its subcellular location is the cytoplasm. The enzyme catalyses an N-acyl-L-alpha-aminoacyl-tRNA + H2O = an N-acyl-L-amino acid + a tRNA + H(+). In terms of biological role, hydrolyzes ribosome-free peptidyl-tRNAs (with 1 or more amino acids incorporated), which drop off the ribosome during protein synthesis, or as a result of ribosome stalling. Functionally, catalyzes the release of premature peptidyl moieties from peptidyl-tRNA molecules trapped in stalled 50S ribosomal subunits, and thus maintains levels of free tRNAs and 50S ribosomes. This is Peptidyl-tRNA hydrolase from Neisseria meningitidis serogroup A / serotype 4A (strain DSM 15465 / Z2491).